A 145-amino-acid chain; its full sequence is Granulysin (145 aa).

An N-terminal signal peptide occupies residues 1–22 (MATWALLLLAAMLLGNPGLVFS). Positions 62–142 (LGRDYRTCLT…EDLRLCIPST (81 aa)) constitute a Saposin B-type domain. 2 cysteine pairs are disulfide-bonded: cysteine 69–cysteine 132 and cysteine 96–cysteine 107.

Post-translationally, a 9 kDa form is produced by proteolytic processing of a 15 kDa protein. As to expression, expressed in natural killer and T-cells.

It localises to the secreted. Antimicrobial protein that kills intracellular pathogens. Active against a broad range of microbes, including Gram-positive and Gram-negative bacteria, fungi, and parasites. Kills Mycobacterium tuberculosis. The chain is Granulysin (GNLY) from Homo sapiens (Human).